The chain runs to 3230 residues: Helicase SRCAP (3230 aa).

The tract at residues 1–71 is disordered; that stretch reads MQSSPSPAHP…GPPDGATVPL (71 aa). Positions 26–41 are enriched in low complexity; that stretch reads GSNPVSPASSSSPASS. The HSA domain occupies 124–196; sequence LPKVPEPPRP…EQAKLRRIAS (73 aa). Disordered regions lie at residues 253–547 and 559–581; these read QPLT…EEDD and EEQSEADAGSGPPTPGPTTLGPK. Residues 257–273 are compositionally biased toward low complexity; it reads SSKAGSSPCLGSSSAAS. The span at 283-313 shows a compositional bias: acidic residues; that stretch reads DDEDGDFQPQEDEEEDDEETIEVEEQQEGND. Basic and acidic residues predominate over residues 315–329; sequence EAQRREIELLRREGE. Over residues 337–356 the composition is skewed to low complexity; the sequence is RSLPPQLLEGPSSPSQTPSS. Residues 397–425 are compositionally biased toward acidic residues; it reads DEDDEEFTANEEEAEDEEDTIAAEEQLEG. Residues 426–441 show a composition bias toward basic and acidic residues; the sequence is EVDHAMELSELAREGE. 3 stretches are compositionally biased toward acidic residues: residues 462-490, 503-517, and 524-533; these read SEDEDEDEVDANSSDCEPEGPVEAEEPPQ, RSEDEEDEHSEEEET, and EESESEESED. Residues 630-795 enclose the Helicase ATP-binding domain; the sequence is VTMYEKKLNG…WSLMHFLMPH (166 aa). 643 to 650 provides a ligand contact to ATP; the sequence is DEMGLGKT. Disordered stretches follow at residues 1017–1045, 1058–1125, and 1138–1166; these read APLGPVPVRPPPGPELSAQPTPGPVPQVL, PPLI…PGSS, and TFPPAAATTTSTTTATATTTAVPAPTPAP. Composition is skewed to pro residues over residues 1018–1030 and 1058–1076; these read PLGPVPVRPPPGP and PPLIPASRPPGPVLLPPLQ. Residues 1093–1107 are compositionally biased toward low complexity; that stretch reads LSGTSRPPTPTLSLK. Over residues 1108 to 1123 the composition is skewed to pro residues; the sequence is PTPPAPVRLSPAPPPG. Low complexity predominate over residues 1138–1160; that stretch reads TFPPAAATTTSTTTATATTTAVP. Ser1172 carries the post-translational modification Phosphoserine. Disordered regions lie at residues 1320–1366, 1406–1425, 1629–1760, and 1839–1893; these read GLTP…APMP, SLPGPASSPMPIPNSSPLAS, VPVM…ASPV, and SRLP…EEKR. Residues 1323-1336 show a composition bias toward pro residues; sequence PVPPLAPAPRPPSS. The segment covering 1337 to 1360 has biased composition (low complexity); the sequence is GLPAVLNPRPTLTPGRLPTPTLGT. Residues 1675–1691 show a composition bias toward low complexity; the sequence is PASTQTLALAPALAPTL. The segment covering 1692–1733 has biased composition (polar residues); sequence GGSSPSQTLSLGTGNPQGPFPTQTLSLTPASSLVPTPAQTLS. Over residues 1750–1760 the composition is skewed to pro residues; that stretch reads PAPPLAPASPV. The region spanning 2044–2197 is the Helicase C-terminal domain; that stretch reads KLQTLAVLLR…DMAIEGGNFT (154 aa). 6 disordered regions span residues 2214–2233, 2271–2298, 2327–2453, 2564–2583, 2598–3081, and 3095–3230; these read LEEPSSSSVPSAPEEEEETV, FNENDGFPAGEGEEAGRPGAEDEEMSRA, VSRE…APAA, LELASVASSETSSLSLVPPK, KNLS…GRKS, and DLAD…KAKT. Positions 2215–2225 are enriched in low complexity; the sequence is EEPSSSSVPSA. Composition is skewed to basic and acidic residues over residues 2284 to 2298, 2327 to 2358, and 2386 to 2403; these read EAGRPGAEDEEMSRA, VSREELKQAEEQVEAARKDLDQAKEEVFRLPQ, and KAPERPGTRVSERLRGAR. The span at 2438-2448 shows a compositional bias: pro residues; that stretch reads RPAPRPRPTPA. Low complexity-rich tracts occupy residues 2564–2579 and 2600–2611; these read LELASVASSETSSLSL and LSLTPSAPSLTL. A compositionally biased stretch (basic and acidic residues) spans 2669–2679; it reads EADRTSEELTE. Residues 2694-2712 are compositionally biased toward low complexity; sequence VTAEVAAPSTSSSATSSPE. A compositionally biased stretch (polar residues) spans 2782–2794; the sequence is SETSASPGSPSVR. The segment covering 2807 to 2817 has biased composition (low complexity); sequence GPCEAAPSSSL. Basic residues predominate over residues 2856–2868; that stretch reads VKRRRGRPPKKNR. The a.T hook 1 DNA-binding region spans 2857–2869; that stretch reads KRRRGRPPKKNRS. Over residues 2913 to 2926 the composition is skewed to pro residues; that stretch reads IPGPQPLGPQPVHR. The segment at residues 2936 to 2948 is a DNA-binding region (a.T hook 2); that stretch reads KRRRGRPPKARDL. Residues 2953–2965 show a composition bias toward polar residues; sequence TISSAGDGNSESR. A compositionally biased stretch (pro residues) spans 2967 to 2982; that stretch reads QPPPHPSPLTPLPPLL. A compositionally biased stretch (low complexity) spans 2983 to 3002; the sequence is VCPTATVANTVTTVTISTSP. The a.T hook 3 DNA-binding region spans 3004-3016; that stretch reads KRKRGRPPKNPPS. Over residues 3011-3020 the composition is skewed to pro residues; it reads PKNPPSPRPS. The span at 3044–3053 shows a compositional bias: low complexity; the sequence is PQGQGESEGS. Acidic residues predominate over residues 3168–3184; sequence SVEESEAEASGEEEEGD.

The protein belongs to the SNF2/RAD54 helicase family. SWR1 subfamily. In terms of assembly, interacts with CREBBP and EP300. May be part of a complex containing SRCAP, CREBBP, CARM1 and GRIP1. Component of the chromatin-remodeling SRCAP complex composed of at least SRCAP, DMAP1, RUVBL1, RUVBL2, ACTL6A, YEATS4, VPS72, ACTR6 and ZNHIT1. Component of a NuA4-related complex which contains EP400, TRRAP/PAF400, SRCAP, BRD8/SMAP, EPC1, DMAP1/DNMAP1, RUVBL1/TIP49, RUVBL2, actin, ACTL6A/BAF53A, VPS72 and YEATS4/GAS41. (Microbial infection) Interacts with hepatitis C virus (HCV) NS5A. As to quaternary structure, (Microbial infection) Interacts with human adenovirus 2 DBP.

The protein resides in the nucleus. Functionally, catalytic component of the SRCAP complex which mediates the ATP-dependent exchange of histone H2AZ/H2B dimers for nucleosomal H2A/H2B, leading to transcriptional regulation of selected genes by chromatin remodeling. Acts as a coactivator for CREB-mediated transcription, steroid receptor-mediated transcription, and Notch-mediated transcription. The polypeptide is Helicase SRCAP (SRCAP) (Homo sapiens (Human)).